We begin with the raw amino-acid sequence, 509 residues long: ATP synthase subunit alpha (509 aa).

Residue 169–176 coordinates ATP; it reads GDRQTGKT.

The protein belongs to the ATPase alpha/beta chains family. F-type ATPases have 2 components, CF(1) - the catalytic core - and CF(0) - the membrane proton channel. CF(1) has five subunits: alpha(3), beta(3), gamma(1), delta(1), epsilon(1). CF(0) has three main subunits: a(1), b(2) and c(9-12). The alpha and beta chains form an alternating ring which encloses part of the gamma chain. CF(1) is attached to CF(0) by a central stalk formed by the gamma and epsilon chains, while a peripheral stalk is formed by the delta and b chains.

It is found in the cell inner membrane. It catalyses the reaction ATP + H2O + 4 H(+)(in) = ADP + phosphate + 5 H(+)(out). Produces ATP from ADP in the presence of a proton gradient across the membrane. The alpha chain is a regulatory subunit. The chain is ATP synthase subunit alpha from Brucella suis biovar 1 (strain 1330).